The sequence spans 200 residues: Probable gluconokinase (200 aa).

34 to 41 (GVSGSGKT) serves as a coordination point for ATP.

Belongs to the gluconokinase GntK/GntV family.

The catalysed reaction is D-gluconate + ATP = 6-phospho-D-gluconate + ADP + H(+). The protein operates within carbohydrate acid metabolism; D-gluconate degradation. The polypeptide is Probable gluconokinase (Dictyostelium discoideum (Social amoeba)).